The sequence spans 342 residues: S-adenosylmethionine:tRNA ribosyltransferase-isomerase (342 aa).

It belongs to the QueA family. As to quaternary structure, monomer.

It localises to the cytoplasm. The catalysed reaction is 7-aminomethyl-7-carbaguanosine(34) in tRNA + S-adenosyl-L-methionine = epoxyqueuosine(34) in tRNA + adenine + L-methionine + 2 H(+). Its pathway is tRNA modification; tRNA-queuosine biosynthesis. Functionally, transfers and isomerizes the ribose moiety from AdoMet to the 7-aminomethyl group of 7-deazaguanine (preQ1-tRNA) to give epoxyqueuosine (oQ-tRNA). The protein is S-adenosylmethionine:tRNA ribosyltransferase-isomerase of Shouchella clausii (strain KSM-K16) (Alkalihalobacillus clausii).